We begin with the raw amino-acid sequence, 198 residues long: Alkyl hydroperoxide reductase C (198 aa).

In terms of domain architecture, Thioredoxin spans 2–163; sequence TLVTQKAPNF…MIRMIDALNF (162 aa). Cys50 (cysteine sulfenic acid (-SOH) intermediate) is an active-site residue.

It belongs to the peroxiredoxin family. AhpC/Prx1 subfamily. In terms of assembly, homodimer; disulfide-linked, upon oxidation. 5 homodimers assemble to form a ring-like decamer.

It is found in the cytoplasm. It catalyses the reaction a hydroperoxide + NADH + H(+) = an alcohol + NAD(+) + H2O. Functionally, thiol-specific peroxidase that catalyzes the reduction of hydrogen peroxide and organic hydroperoxides to water and alcohols, respectively. Plays a role in cell protection against oxidative stress by detoxifying peroxides. The chain is Alkyl hydroperoxide reductase C from Buchnera aphidicola subsp. Schizaphis graminum (strain Sg).